We begin with the raw amino-acid sequence, 181 residues long: Peptide deformylase (181 aa).

Positions 99 and 141 each coordinate Fe cation. The active site involves Glu142. Position 145 (His145) interacts with Fe cation.

This sequence belongs to the polypeptide deformylase family. Requires Fe(2+) as cofactor.

The enzyme catalyses N-terminal N-formyl-L-methionyl-[peptide] + H2O = N-terminal L-methionyl-[peptide] + formate. Its function is as follows. Removes the formyl group from the N-terminal Met of newly synthesized proteins. Requires at least a dipeptide for an efficient rate of reaction. N-terminal L-methionine is a prerequisite for activity but the enzyme has broad specificity at other positions. The protein is Peptide deformylase of Chlamydia muridarum (strain MoPn / Nigg).